The following is a 290-amino-acid chain: uncharacterized protein (290 aa).

NAD(+) is bound by residues 7 to 21 (AVFGLGVMGSPMAQN) and Thr-100. The active site involves Lys-175. Lys-243 is a binding site for NAD(+).

Belongs to the HIBADH-related family.

This is an uncharacterized protein from Synechocystis sp. (strain ATCC 27184 / PCC 6803 / Kazusa).